A 150-amino-acid chain; its full sequence is Submaxillary gland androgen-regulated protein 2, isoform alpha (150 aa).

The first 22 residues, 1-22, serve as a signal peptide directing secretion; sequence MKALYMVFVLWVLIGCFLSGEC.

Its subcellular location is the secreted. Functionally, may play a role in protection or detoxification. The polypeptide is Submaxillary gland androgen-regulated protein 2, isoform alpha (Smr2) (Mus musculus (Mouse)).